Reading from the N-terminus, the 271-residue chain is Neurexophilin-1 (271 aa).

A signal peptide spans 1–21; that stretch reads MQAACWYVLLLLQPTIYLVTC. The II stretch occupies residues 22–97; the sequence is ANLTNGGKSE…WDWLRNSTDL (76 aa). N-linked (GlcNAc...) asparagine glycans are attached at residues asparagine 23, asparagine 68, asparagine 93, asparagine 146, asparagine 156, and asparagine 162. An III region spans residues 98–176; sequence QEPRPRAKRR…LVPPTKIVEF (79 aa). The tract at residues 177–185 is IV (linker domain); that stretch reads DLAQQTVID. Positions 186–271 are v (Cys-rich); that stretch reads AKDSKSFNCR…HSDTPYFPSG (86 aa).

The protein belongs to the neurexophilin family.

Its subcellular location is the secreted. Functionally, may be signaling molecules that resemble neuropeptides and that act by binding to alpha-neurexins and possibly other receptors. This is Neurexophilin-1 (NXPH1) from Pongo abelii (Sumatran orangutan).